The sequence spans 531 residues: Poly(A)-specific ribonuclease PNLDC1 (531 aa).

Mg(2+) contacts are provided by Asp-28, Glu-30, Asp-271, and Asp-365. Residues 506–526 (ITCLLQVCSIVTTWAMIAFLL) traverse the membrane as a helical segment.

The protein belongs to the CAF1 family. Mg(2+) serves as cofactor. Specifically expressed in embryonic stem cells. Highly expressed in testis.

The protein localises to the endoplasmic reticulum membrane. The enzyme catalyses Exonucleolytic cleavage of poly(A) to 5'-AMP.. In terms of biological role, 3'-exoribonuclease that has a preference for poly(A) tails of mRNAs, thereby efficiently degrading poly(A) tails. Exonucleolytic degradation of the poly(A) tail is often the first step in the decay of eukaryotic mRNAs and is also used to silence certain maternal mRNAs translationally during oocyte maturation and early embryonic development. May act as a regulator of multipotency in embryonic stem cells. Is a critical factor for proper spermatogenesis, involved in pre-piRNAs processing to generate mature piRNAs. In Mus musculus (Mouse), this protein is Poly(A)-specific ribonuclease PNLDC1.